We begin with the raw amino-acid sequence, 22 residues long: Large ribosomal subunit protein bL32 (22 aa).

Residues 1 to 22 (CVPKRKVSPSXRNMRXAHDXLT) are disordered.

The protein belongs to the bacterial ribosomal protein bL32 family.

This chain is Large ribosomal subunit protein bL32 (rpmF), found in Brevundimonas vesicularis (Pseudomonas vesicularis).